Here is a 202-residue protein sequence, read N- to C-terminus: Neurensin-2 (202 aa).

A run of 2 helical transmembrane segments spans residues 65-85 (VAVA…GYAV) and 116-136 (VVGA…LFLI). The segment at 162–202 (RDEPEKLSPAFHETSSQSPFLTPPSPFGQQSVQTSQPQRDL) is disordered. Residues 188–202 (FGQQSVQTSQPQRDL) show a composition bias toward polar residues.

The protein belongs to the VMP family. Expressed specifically in brain where it is widely expressed, with highest levels of expression in thalamus and hypothalamus. In brain, found in neural cell bodies and detected in many regions of the limbic system, such as the septum nucleus, horizontal and vertical limbs of the diagonal band, hippocampus, amygdaloid nucleus, and habernula nucleus. Also localizes to small vesicles found in the perinuclear region of Neuro2a and PC12 cells.

Its subcellular location is the membrane. Functionally, may play a role in maintenance and/or transport of vesicles. This chain is Neurensin-2, found in Mus musculus (Mouse).